A 305-amino-acid polypeptide reads, in one-letter code: Putative beta-lactamase HcpD (305 aa).

Residues 1-27 form the signal peptide; sequence MIKSWTKKWFLILFLMASCFGHLVATT. TPR repeat units follow at residues 28–61, 96–133, 168–205, and 240–277; these read GEKY…RMGV, HLAC…KGGV, GISC…KDGA, and GSGC…GFSG. 7 disulfides stabilise this stretch: Cys-55–Cys-63, Cys-91–Cys-99, Cys-127–Cys-135, Cys-163–Cys-171, Cys-199–Cys-207, Cys-235–Cys-243, and Cys-271–Cys-279.

It belongs to the hcp beta-lactamase family.

Its subcellular location is the secreted. The catalysed reaction is a beta-lactam + H2O = a substituted beta-amino acid. In terms of biological role, may hydrolyze 6-aminopenicillinic acid and 7-aminocephalosporanic acid (ACA) derivatives. Binds to penicillin. The chain is Putative beta-lactamase HcpD (hcpD) from Helicobacter pylori (strain J99 / ATCC 700824) (Campylobacter pylori J99).